A 141-amino-acid polypeptide reads, in one-letter code: MNQRRENYVSDPSAYPDRSADWYEYFDRKRREEIIEIIDSHPEIIDEHERNPFGYRNHPSPHLQRVHNYFRMQPTFGKYYIYTEREWSSYRIAEIREFGKLPVLTDDSFATEEEAMHAVFLKRIEDVRNELSQAEQREIAN.

Heterotetramer of two DmfA1 (alpha) and two DmfA2 (beta) subunits.

It carries out the reaction N,N-dimethylformamide + H2O = dimethylamine + formate. Its function is as follows. Hydrolyzes N,N-dimethylformamide, and to a lesser extent N,N-dimethylacetamide and N,N-diethylacetamide. Has no activity against the substituted amides N-methylformamide, N-ethylformamide, N-ethylformamide and N-methylacetamide or the unsubstituted amides formamide, nicotinamide, acetoamide, benzamide, acetamide and acrylamide. The polypeptide is N,N-dimethylformamidase alpha subunit (Paracoccus aminophilus).